Reading from the N-terminus, the 113-residue chain is UPF0102 protein CHU_0465 (113 aa).

Belongs to the UPF0102 family.

The protein is UPF0102 protein CHU_0465 of Cytophaga hutchinsonii (strain ATCC 33406 / DSM 1761 / CIP 103989 / NBRC 15051 / NCIMB 9469 / D465).